Here is a 369-residue protein sequence, read N- to C-terminus: Deoxyhypusine synthase (369 aa).

Residue Ser-78 is modified to Phosphoserine. NAD(+) is bound by residues 105 to 109 (SNLIS), 131 to 133 (TAG), Glu-137, and Asp-238. 136 to 137 (EE) lines the spermidine pocket. Asp-243 is a binding site for spermidine. NAD(+) is bound at residue Gly-283. His-288 lines the spermidine pocket. 308–309 (TA) contacts NAD(+). Residues 314-316 (GSD) and 323-329 (EAVSWGK) contribute to the spermidine site. Lys-329 serves as the catalytic Nucleophile. 342–343 (DA) is an NAD(+) binding site.

It belongs to the deoxyhypusine synthase family. As to quaternary structure, homotetramer formed by a dimer of dimers. NAD(+) is required as a cofactor.

It catalyses the reaction [eIF5A protein]-L-lysine + spermidine = [eIF5A protein]-deoxyhypusine + propane-1,3-diamine. It functions in the pathway protein modification; eIF5A hypusination. Its function is as follows. Catalyzes the NAD-dependent oxidative cleavage of spermidine and the subsequent transfer of the butylamine moiety of spermidine to the epsilon-amino group of a critical lysine residue of the eIF-5A precursor protein to form the intermediate deoxyhypusine residue. This is the first step of the post-translational modification of that lysine into an unusual amino acid residue named hypusine. Hypusination is unique to mature eIF-5A factor and is essential for its function. This Homo sapiens (Human) protein is Deoxyhypusine synthase (DHPS).